The following is a 459-amino-acid chain: FAD-dependent monooxygenase CTB5 (459 aa).

One can recognise an FAD-binding PCMH-type domain in the interval 10–187 (SDLHPSCIAL…TAVTLKAFEQ (178 aa)).

This sequence belongs to the oxygen-dependent FAD-linked oxidoreductase family.

It functions in the pathway mycotoxin biosynthesis. In terms of biological role, FAD-dependent monooxygenase; part of the gene cluster that mediates the biosynthesis of cercosporin, a light-activated, non-host-selective toxin. The perylenequinone chromophore of cercosporin absorbs light energy to attain an electronically-activated triplet state and produces active oxygen species such as the hydroxyl radical, superoxide, hydrogen peroxide or singlet oxygen upon reaction with oxygen molecules. These reactive oxygen species cause damage to various cellular components including lipids, proteins and nucleic acids. The first step of cercosporin biosynthesis is performed by the polyketide synthase CTB1 which catalyzes the formation of nor-toralactone. The starter unit acyltransferase (SAT) domain of CTB1 initiates polyketide extension by the selective utilization of acetyl-CoA, which is elongated to the heptaketide in the beta-ketoacyl synthase (KS) domain by successive condensations with six malonyl units introduced by the malonyl acyltransferase (MAT) domain. The product template (PT) domain catalyzes C4-C9 and C2-C11 aldol cyclizations and dehydrations to a trihydroxynaphthalene, which is thought to be delivered to the thioesterase (TE) domain for product release. The bifunctional enzyme CTB3 then methylates nor-toralactone to toralactone before conducting an unusual oxidative aromatic ring opening. The O-methyltransferase CTB2 further methylates the nascent OH-6 of the CBT3 product, blocking further oxidation at this site before the reductase CTB6 reduces the 2-oxopropyl ketone at position C7, giving naphthalene. The FAD-dependent monooxygenase CTB5 in concert with the multicopper oxidase CTB12 are responsible for homodimerization of naphthalene with CTB7 installing the dioxepine moiety, finally producing cercosporin. The fasciclin domain-containing protein CTB11 might act with CTB5 and CTB12 whereas the roles of CTB9 and CTB10 have still to be elucidated. The protein is FAD-dependent monooxygenase CTB5 of Cercospora nicotianae (Barn spot disease fungus).